We begin with the raw amino-acid sequence, 131 residues long: Large-conductance mechanosensitive channel (131 aa).

Transmembrane regions (helical) follow at residues 14 to 34 (VMDM…VTSL) and 71 to 91 (GNFI…FLLV).

Belongs to the MscL family. Homopentamer.

The protein resides in the cell inner membrane. In terms of biological role, channel that opens in response to stretch forces in the membrane lipid bilayer. May participate in the regulation of osmotic pressure changes within the cell. The sequence is that of Large-conductance mechanosensitive channel from Dinoroseobacter shibae (strain DSM 16493 / NCIMB 14021 / DFL 12).